The following is an 888-amino-acid chain: MDMATSNINGHGDRPSPAARFPTAPSVMTMNGNFASVGDAPTKEQYEHGIQVIDEQKEFNPNLNEYLQYTDTAHSGFNYHLISVFGSQSTGKSTLLNHLFGTQFGVMSERERRQTTKGIWMSKNKNQSSGASESETMADNILVMDVEGTDGRERGEDQDFERKSALFALATSEVLIVNIWEHQVGLYQGANMGLLKTVFEVNCQLFLKDKQSTPRSLLFFVIRDHLGTTPLANLKETLIQDLSAIWTSLSKPAGLENSKIEDYFDFAFAALPHKILQPDKFITEVQKLGTRFRAGRKSARAEDAGFEGGVFLPEYHRRIPADGFAVYTEGVWDQIVNNKDLDLPTQQELLAQFRCDEISREVLISFDAKIHPLEEKQGEDVRSGKPTVIADLGVTGKTARTSTIKHFETQASRYHKAVYTLKRTELEGKIDTRLKLLFHGQLLAAHKSGVASFSDAVSTAVKNGQKRAASYEFADIVEREKEVALKTFEAEMKSLYIEELSWTNFSSSYDLFEKDLNEVSGNLRKEEMRRLATHVERWVRSRLNDSIGVEFNKLGSGRGGSGAPETGEKPATEKDLWDRIWKTFTGTVKEAESKFIERAKSFDASEDEIEIGLWRLRRKSWGVLRAKIDEEVMEGNILLKLRENFEDKFRYDEAGVPRIWRPSDDIEGIYTKARESTLTLIPLLAKFKLLETSSPPELPEWIGNTPASVDPKDEEDLTPIGGVDEEEGKSLEEEMTVLSEAKRQDLVVRFKKTADGVYVEAKRSAIGGVAQVPLYFYGLLLALGWNEIVAVLRNPIYFVFLILCGVAGYVTYTLNLWGPIIRMLNAASTQGVEIGKEKLREFLKDSEVGRQALGMQGRDAGDSDAISLNTLDSRGKRVVREDEDVDEI.

The disordered stretch occupies residues 1-24 (MDMATSNINGHGDRPSPAARFPTA). At 1 to 771 (MDMATSNING…KRSAIGGVAQ (771 aa)) the chain is on the cytoplasmic side. The region spanning 76 to 315 (GFNYHLISVF…FEGGVFLPEY (240 aa)) is the GB1/RHD3-type G domain. 86–93 (GSQSTGKS) is a GTP binding site. Residues 703–723 (GNTPASVDPKDEEDLTPIGGV) are disordered. Positions 712–723 (KDEEDLTPIGGV) are enriched in acidic residues. The stretch at 724-745 (DEEEGKSLEEEMTVLSEAKRQD) forms a coiled coil. The chain crosses the membrane as a helical span at residues 772 to 792 (VPLYFYGLLLALGWNEIVAVL). Topologically, residues 793–795 (RNP) are lumenal. Residues 796 to 816 (IYFVFLILCGVAGYVTYTLNL) traverse the membrane as a helical segment. The Cytoplasmic segment spans residues 817–888 (WGPIIRMLNA…VREDEDVDEI (72 aa)).

It belongs to the TRAFAC class dynamin-like GTPase superfamily. GB1/RHD3 GTPase family. RHD3 subfamily.

The protein localises to the endoplasmic reticulum membrane. Functionally, cooperates with the reticulon proteins and tubule-shaping DP1 family proteins to generate and maintain the structure of the tubular endoplasmic reticulum network. Has GTPase activity, which is required for its function in ER organization. In Sclerotinia sclerotiorum (strain ATCC 18683 / 1980 / Ss-1) (White mold), this protein is Protein sey1 (sey1).